Here is a 95-residue protein sequence, read N- to C-terminus: Integration host factor subunit beta (95 aa).

The protein belongs to the bacterial histone-like protein family. In terms of assembly, heterodimer of an alpha and a beta chain.

This protein is one of the two subunits of integration host factor, a specific DNA-binding protein that functions in genetic recombination as well as in transcriptional and translational control. This chain is Integration host factor subunit beta, found in Shewanella putrefaciens (strain CN-32 / ATCC BAA-453).